Here is a 396-residue protein sequence, read N- to C-terminus: Trypacidin cluster transcription factor (396 aa).

A DNA-binding region (zn(2)-C6 fungal-type) is located at residues 20-47; the sequence is CRACGLSKVRCSKEKPTCSRCRRRGTVC. Disordered stretches follow at residues 54–120, 190–218, and 346–365; these read RPGR…LSTV, DPAP…ESEA, and MHGA…PAPL. The segment covering 57 to 71 has biased composition (basic and acidic residues); it reads RKPDSRSEVEPEPGH. Residues 72–82 show a composition bias toward low complexity; it reads LSHPLPSPESS.

Specifically expressed in conidia.

It localises to the nucleus. Its function is as follows. Transcription factor that regulates the expression of the gene clusters that mediate the biosynthesis of trypacidin, a metabolite with antiprotozoal activity and a possible role in the infection process. Trypacidin is toxic for human pulmonary and bronchial epithelial cells by initiating the intracellular formation of nitric oxide (NO) and hydrogen peroxide (H(2)O(2)), thus triggering host necrotic cell death. The protein is Trypacidin cluster transcription factor of Aspergillus fumigatus (strain ATCC MYA-4609 / CBS 101355 / FGSC A1100 / Af293) (Neosartorya fumigata).